We begin with the raw amino-acid sequence, 435 residues long: 3-phosphoshikimate 1-carboxyvinyltransferase (435 aa).

3 residues coordinate 3-phosphoshikimate: Lys21, Ser22, and Arg26. Lys21 is a binding site for phosphoenolpyruvate. Positions 98 and 126 each coordinate phosphoenolpyruvate. 3-phosphoshikimate is bound by residues Ser169, Ser170, Gln171, Ser197, Asp312, and Lys339. Gln171 is a binding site for phosphoenolpyruvate. The active-site Proton acceptor is the Asp312. Residues Arg343, Arg386, and Lys412 each coordinate phosphoenolpyruvate.

It belongs to the EPSP synthase family. In terms of assembly, monomer.

It is found in the cytoplasm. The enzyme catalyses 3-phosphoshikimate + phosphoenolpyruvate = 5-O-(1-carboxyvinyl)-3-phosphoshikimate + phosphate. It participates in metabolic intermediate biosynthesis; chorismate biosynthesis; chorismate from D-erythrose 4-phosphate and phosphoenolpyruvate: step 6/7. In terms of biological role, catalyzes the transfer of the enolpyruvyl moiety of phosphoenolpyruvate (PEP) to the 5-hydroxyl of shikimate-3-phosphate (S3P) to produce enolpyruvyl shikimate-3-phosphate and inorganic phosphate. The chain is 3-phosphoshikimate 1-carboxyvinyltransferase from Clostridium beijerinckii (strain ATCC 51743 / NCIMB 8052) (Clostridium acetobutylicum).